The primary structure comprises 158 residues: Small ribosomal subunit protein uS9 (158 aa).

A compositionally biased stretch (polar residues) spans 1–10; it reads MSDTMQSLDQ. The tract at residues 1-35 is disordered; it reads MSDTMQSLDQLSALKTAAPDAPKREKKVDKQGRAY. Positions 21–32 are enriched in basic and acidic residues; that stretch reads APKREKKVDKQG.

Belongs to the universal ribosomal protein uS9 family.

The chain is Small ribosomal subunit protein uS9 from Afipia carboxidovorans (strain ATCC 49405 / DSM 1227 / KCTC 32145 / OM5) (Oligotropha carboxidovorans).